Consider the following 401-residue polypeptide: Putative F-box/FBD/LRR-repeat protein At3g23955 (401 aa).

The F-box domain occupies Val-56–Ser-102. LRR repeat units lie at residues Ile-128–Lys-152 and Met-275–Ser-296. Residues Ile-321–Leu-373 form the FBD domain.

This Arabidopsis thaliana (Mouse-ear cress) protein is Putative F-box/FBD/LRR-repeat protein At3g23955.